Reading from the N-terminus, the 431-residue chain is Adenylosuccinate synthetase (431 aa).

GTP is bound by residues 13–19 (GDEGKGK) and 41–43 (GHT). The Proton acceptor role is filled by Asp14. Residues Asp14 and Gly41 each coordinate Mg(2+). Residues 14–17 (DEGK), 39–42 (NAGH), Thr130, Arg144, Gln225, Thr240, and Arg304 each bind IMP. His42 functions as the Proton donor in the catalytic mechanism. 300 to 306 (AVTGRPR) is a binding site for substrate. Residues Arg306, 332 to 334 (KLD), and 415 to 417 (STG) contribute to the GTP site.

The protein belongs to the adenylosuccinate synthetase family. In terms of assembly, homodimer. It depends on Mg(2+) as a cofactor.

It localises to the cytoplasm. The catalysed reaction is IMP + L-aspartate + GTP = N(6)-(1,2-dicarboxyethyl)-AMP + GDP + phosphate + 2 H(+). The protein operates within purine metabolism; AMP biosynthesis via de novo pathway; AMP from IMP: step 1/2. Functionally, plays an important role in the de novo pathway of purine nucleotide biosynthesis. Catalyzes the first committed step in the biosynthesis of AMP from IMP. The sequence is that of Adenylosuccinate synthetase from Legionella pneumophila (strain Lens).